Reading from the N-terminus, the 318-residue chain is Aspartate carbamoyltransferase catalytic subunit (318 aa).

Carbamoyl phosphate is bound by residues arginine 58 and threonine 59. Position 86 (lysine 86) interacts with L-aspartate. Residues arginine 108, histidine 141, and glutamine 144 each contribute to the carbamoyl phosphate site. Residues arginine 174 and arginine 226 each coordinate L-aspartate. Positions 270 and 271 each coordinate carbamoyl phosphate.

This sequence belongs to the aspartate/ornithine carbamoyltransferase superfamily. ATCase family. Heterododecamer (2C3:3R2) of six catalytic PyrB chains organized as two trimers (C3), and six regulatory PyrI chains organized as three dimers (R2).

It catalyses the reaction carbamoyl phosphate + L-aspartate = N-carbamoyl-L-aspartate + phosphate + H(+). Its pathway is pyrimidine metabolism; UMP biosynthesis via de novo pathway; (S)-dihydroorotate from bicarbonate: step 2/3. Its function is as follows. Catalyzes the condensation of carbamoyl phosphate and aspartate to form carbamoyl aspartate and inorganic phosphate, the committed step in the de novo pyrimidine nucleotide biosynthesis pathway. The polypeptide is Aspartate carbamoyltransferase catalytic subunit (Lactobacillus gasseri (strain ATCC 33323 / DSM 20243 / BCRC 14619 / CIP 102991 / JCM 1131 / KCTC 3163 / NCIMB 11718 / NCTC 13722 / AM63)).